The following is a 121-amino-acid chain: uncharacterized protein (121 aa).

This is an uncharacterized protein from Schizosaccharomyces pombe (strain 972 / ATCC 24843) (Fission yeast).